The chain runs to 153 residues: Protein SprT-like (153 aa).

The SprT-like domain occupies 7–145; it reads QTLVEKISIV…VCGKCHGRLS (139 aa). His-67 is a binding site for Zn(2+). Residue Glu-68 is part of the active site. His-71 contributes to the Zn(2+) binding site.

It belongs to the SprT family. Zn(2+) is required as a cofactor.

The protein resides in the cytoplasm. The polypeptide is Protein SprT-like (Enterococcus faecalis (strain ATCC 700802 / V583)).